Reading from the N-terminus, the 191-residue chain is Large ribosomal subunit protein bL9 (191 aa).

The segment at 151 to 191 is disordered; it reads AERQAKGESLTSADAIYGVDEDALKPEDFFNPEAEIESEEE.

This sequence belongs to the bacterial ribosomal protein bL9 family.

In terms of biological role, binds to the 23S rRNA. The sequence is that of Large ribosomal subunit protein bL9 from Sinorhizobium medicae (strain WSM419) (Ensifer medicae).